The chain runs to 142 residues: Hemoglobin subunit alpha-A (142 aa).

Residues Val2–Arg142 form the Globin domain. An O2-binding site is contributed by His59. Heme b is bound at residue His88.

It belongs to the globin family. In terms of assembly, heterotetramer of two alpha chains and two beta chains. Red blood cells.

Functionally, involved in oxygen transport from the lung to the various peripheral tissues. The chain is Hemoglobin subunit alpha-A (HBAA) from Mareca penelope (Eurasian wigeon).